We begin with the raw amino-acid sequence, 193 residues long: Ion-translocating oxidoreductase complex subunit A (193 aa).

6 helical membrane passes run 5–25, 39–59, 67–87, 102–122, 134–154, and 171–191; these read LLLL…FLGL, IGMG…SYLV, LGIE…VVQF, VLGI…VALL, IIYG…FSAM, and SIAM…TGLV.

It belongs to the NqrDE/RnfAE family. As to quaternary structure, the complex is composed of six subunits: RnfA, RnfB, RnfC, RnfD, RnfE and RnfG.

The protein localises to the cell inner membrane. Part of a membrane-bound complex that couples electron transfer with translocation of ions across the membrane. The protein is Ion-translocating oxidoreductase complex subunit A of Aliivibrio fischeri (strain ATCC 700601 / ES114) (Vibrio fischeri).